Here is a 251-residue protein sequence, read N- to C-terminus: Adenosine 5'-phosphosulfate reductase (251 aa).

The [4Fe-4S] cluster site is built by Cys121, Cys122, Cys204, and Cys207. Residue Cys232 is the Nucleophile; cysteine thiosulfonate intermediate of the active site.

This sequence belongs to the PAPS reductase family. CysH subfamily. Requires [4Fe-4S] cluster as cofactor.

It localises to the cytoplasm. The catalysed reaction is [thioredoxin]-disulfide + sulfite + AMP + 2 H(+) = adenosine 5'-phosphosulfate + [thioredoxin]-dithiol. The protein operates within sulfur metabolism; hydrogen sulfide biosynthesis; sulfite from sulfate. Catalyzes the formation of sulfite from adenosine 5'-phosphosulfate (APS) using thioredoxin as an electron donor. The polypeptide is Adenosine 5'-phosphosulfate reductase (Sinorhizobium fredii (strain NBRC 101917 / NGR234)).